The sequence spans 205 residues: Small ribosomal subunit protein uS4 (205 aa).

The 59-residue stretch at 91–149 (MRLDALVLRAAFARSISQARQLVVHRHILVDGKLVDRPSYSVSPGQTVKVKPKSVPLDP) folds into the S4 RNA-binding domain.

Belongs to the universal ribosomal protein uS4 family. As to quaternary structure, part of the 30S ribosomal subunit. Contacts protein S5. The interaction surface between S4 and S5 is involved in control of translational fidelity.

One of the primary rRNA binding proteins, it binds directly to 16S rRNA where it nucleates assembly of the body of the 30S subunit. In terms of biological role, with S5 and S12 plays an important role in translational accuracy. The polypeptide is Small ribosomal subunit protein uS4 (Tropheryma whipplei (strain TW08/27) (Whipple's bacillus)).